An 872-amino-acid polypeptide reads, in one-letter code: Homeobox-leucine zipper protein ROC6 (872 aa).

Disordered stretches follow at residues 28–53 and 67–130; these read VHNS…GLSL and NRSL…HRHT. The segment covering 74 to 85 has biased composition (gly residues); sequence GNGGSGSGGDGD. Positions 86 to 99 are enriched in basic and acidic residues; that stretch reads SLGRGREEENDSRS. Over residues 119-130 the composition is skewed to basic residues; sequence PRKKKKRYHRHT. A DNA-binding region (homeobox) is located at residues 122–181; it reads KKKRYHRHTPQQIQELEAVFKECPHPDEKQRMELSRRLNLESRQVKFWFQNRRTQMKQTQ. Residues 176-248 are a coiled coil; sequence QMKQTQIERH…LKDELDRVCA (73 aa). Residues 340 to 583 form the START domain; it reads GAIDRAVLLE…LQRQCQYLAI (244 aa). The disordered stretch occupies residues 792–818; that stretch reads HNNGASPSPAEVGSGASPNSAAGGGGG.

The protein belongs to the HD-ZIP homeobox family. Class IV subfamily.

It is found in the nucleus. Functionally, probable transcription factor. The protein is Homeobox-leucine zipper protein ROC6 (ROC6) of Oryza sativa subsp. japonica (Rice).